Here is a 286-residue protein sequence, read N- to C-terminus: B3 domain-containing protein REM11 (286 aa).

A DNA-binding region (TF-B3 1) is located at residues 1–70 (MAWNLAIITL…TPMLSLVSTQ (70 aa)). The tract at residues 68–114 (STQSTSHKSQKRECSKHSEKESISAVPSKGKKNRKARSNREERRDSS) is disordered. A compositionally biased stretch (basic and acidic residues) spans 78–89 (KRECSKHSEKES). A DNA-binding region (TF-B3 2) is located at residues 119–219 (NRFVTFTPED…RAQVCFYGVF (101 aa)).

It localises to the nucleus. This Arabidopsis thaliana (Mouse-ear cress) protein is B3 domain-containing protein REM11 (REM11).